Reading from the N-terminus, the 393-residue chain is Serine/threonine-protein kinase US3 homolog (393 aa).

The 286-residue stretch at 93–378 (FVILKTFTPG…AEVLLNHSVF (286 aa)) folds into the Protein kinase domain. ATP is bound by residues 99–107 (FTPGAEGFA) and lysine 122. Aspartate 206 functions as the Proton acceptor in the catalytic mechanism.

Belongs to the protein kinase superfamily. Ser/Thr protein kinase family. Phosphorylated by ORF47; this phosphorylation regulates subsequent phosphorylation of proteins 24 and 27 by ORF66. Autophosphorylated.

The protein localises to the host cytoplasm. It is found in the host nucleus. It catalyses the reaction L-seryl-[protein] + ATP = O-phospho-L-seryl-[protein] + ADP + H(+). The enzyme catalyses L-threonyl-[protein] + ATP = O-phospho-L-threonyl-[protein] + ADP + H(+). In terms of biological role, multifunctional serine/threonine kinase that plays a role in several processes including egress of virus particles from the nucleus, modulation of the actin cytoskeleton and inhibition of apoptosis. Phosphorylates proteins 24 and 27, two critical regulators of capsid budding from nucleus to endoplasmic reticulum, thereby facilitating virion egress. Modulates and redistributes host components of the nuclear envelope, including LMNA, emerin/EMD and the nuclear matrix protein MATR3. Phosphorylates envelope glycoprotein B (gB), probably to direct it to the cell surface. Promotes virus intracellular spread by restructuring host cell cytoskeleton. Blocks host apoptosis to extend cell survival and allow efficient viral replication. Promotes viral gene expression by phosphorylating host HDAC2 to reduce viral genome silencing. Down-regulates class I major histocompatibility complex (MHC-I) surface expression. Additionally, phosphorylates IE62 and targets it to the cytoplasm. The nuclear exclusion of IE62 enables the packaging of abundant levels of IE62 into virions. The sequence is that of Serine/threonine-protein kinase US3 homolog (66) from Varicella-zoster virus (strain Dumas) (HHV-3).